We begin with the raw amino-acid sequence, 96 residues long: Large ribosomal subunit protein bL27 (96 aa).

A propeptide spanning residues 1–9 is cleaved from the precursor; it reads MLKFDIQHF. Positions 1–33 are disordered; that stretch reads MLKFDIQHFAHKKGGGSTSNGRDSESKRLGAKR. Basic and acidic residues predominate over residues 22 to 33; it reads RDSESKRLGAKR.

It belongs to the bacterial ribosomal protein bL27 family. Post-translationally, the N-terminus is cleaved by ribosomal processing cysteine protease Prp.

The polypeptide is Large ribosomal subunit protein bL27 (Listeria innocua serovar 6a (strain ATCC BAA-680 / CLIP 11262)).